Consider the following 154-residue polypeptide: MLKFSFLFLTVEKPGGLFDFDGTLPLIAIQFLILMFLLNILLYTPLLKIIDERSEYIANNLQEASIILNKANELSSQYEKEFSKIKKEVELDSLTLQNLHKNILEIEIISSQKIFENYLNQTINNFDSEKEKILTSLDEEINSLSSEIITKIVA.

The helical transmembrane segment at 22 to 42 (GTLPLIAIQFLILMFLLNILL) threads the bilayer.

The protein belongs to the ATPase B chain family. As to quaternary structure, F-type ATPases have 2 components, F(1) - the catalytic core - and F(0) - the membrane proton channel. F(1) has five subunits: alpha(3), beta(3), gamma(1), delta(1), epsilon(1). F(0) has four main subunits: a(1), b(1), b'(1) and c(10-14). The alpha and beta chains form an alternating ring which encloses part of the gamma chain. F(1) is attached to F(0) by a central stalk formed by the gamma and epsilon chains, while a peripheral stalk is formed by the delta, b and b' chains.

Its subcellular location is the plastid. The protein resides in the chloroplast thylakoid membrane. In terms of biological role, f(1)F(0) ATP synthase produces ATP from ADP in the presence of a proton or sodium gradient. F-type ATPases consist of two structural domains, F(1) containing the extramembraneous catalytic core and F(0) containing the membrane proton channel, linked together by a central stalk and a peripheral stalk. During catalysis, ATP synthesis in the catalytic domain of F(1) is coupled via a rotary mechanism of the central stalk subunits to proton translocation. Its function is as follows. Component of the F(0) channel, it forms part of the peripheral stalk, linking F(1) to F(0). The b'-subunit is a diverged and duplicated form of b found in plants and photosynthetic bacteria. The sequence is that of ATP synthase subunit b', chloroplastic from Vaucheria litorea (Yellow-green alga).